A 337-amino-acid chain; its full sequence is Pyridoxal 5'-phosphate synthase subunit PdxS (337 aa).

Asp63 lines the D-ribose 5-phosphate pocket. The active-site Schiff-base intermediate with D-ribose 5-phosphate is the Lys120. Residue Gly192 participates in D-ribose 5-phosphate binding. Lys204 serves as a coordination point for D-glyceraldehyde 3-phosphate. Residues Gly253 and 274–275 (GS) contribute to the D-ribose 5-phosphate site.

Belongs to the PdxS/SNZ family. In terms of assembly, in the presence of PdxT, forms a dodecamer of heterodimers.

The enzyme catalyses aldehydo-D-ribose 5-phosphate + D-glyceraldehyde 3-phosphate + L-glutamine = pyridoxal 5'-phosphate + L-glutamate + phosphate + 3 H2O + H(+). It functions in the pathway cofactor biosynthesis; pyridoxal 5'-phosphate biosynthesis. Its function is as follows. Catalyzes the formation of pyridoxal 5'-phosphate from ribose 5-phosphate (RBP), glyceraldehyde 3-phosphate (G3P) and ammonia. The ammonia is provided by the PdxT subunit. Can also use ribulose 5-phosphate and dihydroxyacetone phosphate as substrates, resulting from enzyme-catalyzed isomerization of RBP and G3P, respectively. The sequence is that of Pyridoxal 5'-phosphate synthase subunit PdxS from Aeropyrum pernix (strain ATCC 700893 / DSM 11879 / JCM 9820 / NBRC 100138 / K1).